The chain runs to 751 residues: Photosystem I P700 chlorophyll a apoprotein A1 (751 aa).

The next 8 membrane-spanning stretches (helical) occupy residues 72–95 (IFSA…FHGA), 158–181 (LYCT…FHYH), 197–221 (MNHH…HVSM), 293–311 (TAHH…GHMY), 348–371 (WHAQ…QHMY), 387–413 (LSLF…IFMV), 435–457 (AIIS…LYIH), and 532–550 (FMVH…LILL). 2 residues coordinate [4Fe-4S] cluster: C574 and C583. A run of 2 helical transmembrane segments spans residues 590-611 (HVFL…HFSW) and 665-687 (LSAY…MFLF). Position 676 (H676) interacts with chlorophyll a'. M684 and Y692 together coordinate chlorophyll a. Residue W693 participates in phylloquinone binding. A helical transmembrane segment spans residues 725-745 (AVGVAHYLLGGIVTTWAFFLA).

Belongs to the PsaA/PsaB family. As to quaternary structure, the PsaA/B heterodimer binds the P700 chlorophyll special pair and subsequent electron acceptors. PSI consists of a core antenna complex that captures photons, and an electron transfer chain that converts photonic excitation into a charge separation. The cyanobacterial PSI reaction center is composed of one copy each of PsaA,B,C,D,E,F,I,J,K,L,M and X, and forms trimeric complexes. It depends on PSI electron transfer chain: 5 chlorophyll a, 1 chlorophyll a', 2 phylloquinones and 3 4Fe-4S clusters. PSI core antenna: 90 chlorophyll a, 22 carotenoids, 3 phospholipids and 1 galactolipid. P700 is a chlorophyll a/chlorophyll a' dimer, A0 is one or more chlorophyll a, A1 is one or both phylloquinones and FX is a shared 4Fe-4S iron-sulfur center. as a cofactor.

Its subcellular location is the cellular thylakoid membrane. It carries out the reaction reduced [plastocyanin] + hnu + oxidized [2Fe-2S]-[ferredoxin] = oxidized [plastocyanin] + reduced [2Fe-2S]-[ferredoxin]. Its function is as follows. PsaA and PsaB bind P700, the primary electron donor of photosystem I (PSI), as well as the electron acceptors A0, A1 and FX. PSI is a plastocyanin/cytochrome c6-ferredoxin oxidoreductase, converting photonic excitation into a charge separation, which transfers an electron from the donor P700 chlorophyll pair to the spectroscopically characterized acceptors A0, A1, FX, FA and FB in turn. Oxidized P700 is reduced on the lumenal side of the thylakoid membrane by plastocyanin or cytochrome c6. This Synechocystis sp. (strain ATCC 27184 / PCC 6803 / Kazusa) protein is Photosystem I P700 chlorophyll a apoprotein A1.